We begin with the raw amino-acid sequence, 72 residues long: Cell division protein ZapB (72 aa).

A coiled-coil region spans residues serine 2 to valine 72. The tract at residues asparagine 34–asparagine 57 is disordered. The segment covering aspartate 42–asparagine 57 has biased composition (basic and acidic residues).

This sequence belongs to the ZapB family. In terms of assembly, homodimer. The ends of the coiled-coil dimer bind to each other, forming polymers. Interacts with FtsZ.

It is found in the cytoplasm. In terms of biological role, non-essential, abundant cell division factor that is required for proper Z-ring formation. It is recruited early to the divisome by direct interaction with FtsZ, stimulating Z-ring assembly and thereby promoting cell division earlier in the cell cycle. Its recruitment to the Z-ring requires functional FtsA or ZipA. The chain is Cell division protein ZapB from Mannheimia succiniciproducens (strain KCTC 0769BP / MBEL55E).